A 331-amino-acid chain; its full sequence is MIFSVDVMGFENDIREAINACRDFCKKNSDVKIILVGDKERIQKEIKSSDNFEIVHASEEIKMTDDPISIRKKTNSSMYKAIELVKENKADGVLSAGNTSCYVFLTFLILGKIPGITKCGFMPYMPTINGRGVNFLDVGANKECDATDLVNFARMGSIYIEKVRNVKNPKVGILNIGTEDNKGLSYHIEANKILKDVKNINYVGFVESRYLLEEKVDLIVSDGFVGNIALKALEGTFKTVLRSLLGTRKKPLFGWLWFLLSIPNLLTIKNKYDYKNNAGAIVLGLNKIAIKTHGSADYKQFYSSLRLLRDTVKADLINILKREFEKDNEGQ.

It belongs to the PlsX family. As to quaternary structure, homodimer. Probably interacts with PlsY.

Its subcellular location is the cytoplasm. It carries out the reaction a fatty acyl-[ACP] + phosphate = an acyl phosphate + holo-[ACP]. Its pathway is lipid metabolism; phospholipid metabolism. Its function is as follows. Catalyzes the reversible formation of acyl-phosphate (acyl-PO(4)) from acyl-[acyl-carrier-protein] (acyl-ACP). This enzyme utilizes acyl-ACP as fatty acyl donor, but not acyl-CoA. This is Phosphate acyltransferase from Malacoplasma penetrans (strain HF-2) (Mycoplasma penetrans).